The sequence spans 1668 residues: Chitin synthase chs-2 (1668 aa).

Over residues 1–19 the composition is skewed to basic and acidic residues; the sequence is MMNTLDHRPLGRMETMEGK. The segment at 1–51 is disordered; that stretch reads MMNTLDHRPLGRMETMEGKPDEDEVPTSSNSDAKGKGYYYSSGTVPTDDST. At 1–116 the chain is on the cytoplasmic side; it reads MMNTLDHRPL…HGFWHDASLQ (116 aa). Residues 117–137 form a helical membrane-spanning segment; the sequence is VLKLATFLVLFLLTLGSAVVA. Topologically, residues 138–176 are extracellular; it reads KSTFILMTSAIGWGGQTITICNQVISEATQNTVKLKNAH. The chain crosses the membrane as a helical span at residues 177 to 197; that stretch reads VVKWVWATLLALSAPEALCFV. Residues 198–212 lie on the Cytoplasmic side of the membrane; that stretch reads RSMHRTMFRNVKRPT. The chain crosses the membrane as a helical span at residues 213 to 233; sequence FIQFVFVLIIETFHSIGVGIL. Topologically, residues 234-242 are extracellular; it reads VFRIFPDLD. Residues 243-263 form a helical membrane-spanning segment; that stretch reads AVTAAQLTNAMCFVPAILSVI. At 264–271 the chain is on the cytoplasmic side; it reads SRKPNKSA. The chain crosses the membrane as a helical span at residues 272 to 292; it reads LLLVIIDFAAIAAQSSGFWAL. Over 293–301 the chain is Extracellular; it reads PMFLPNLQK. Residues 302 to 322 traverse the membrane as a helical segment; that stretch reads HLVAIPVSLTLISLAWWQNFV. Residues 323–347 lie on the Cytoplasmic side of the membrane; sequence HRDSVFPPVRTLAKFAQRLSERRSK. The chain crosses the membrane as a helical span at residues 348–368; sequence TYAFVSLWKICIYVVCCFLFI. The Extracellular segment spans residues 369 to 487; the sequence is SSRMKIEDML…IYSNYVERNQ (119 aa). N-linked (GlcNAc...) asparagine glycosylation occurs at N396. The chain crosses the membrane as a helical span at residues 488–508; the sequence is LTMAYDALWLVIFQFGAVFVC. Over 509-522 the chain is Cytoplasmic; sequence YHSSKFACKVMMQR. A helical membrane pass occupies residues 523 to 543; that stretch reads MGFALPMALSVPVTVLLLSTN. The Extracellular segment spans residues 544-576; it reads CRMRQKDSCYGTNVLTVELFWQCNGASMSLADF. Residues 577–597 form a helical membrane-spanning segment; that stretch reads ILTPQTWIWLCWLASQFWITI. At 598-1045 the chain is on the cytoplasmic side; it reads HLWNPKHERL…ISIWYIIYQL (448 aa). A helical membrane pass occupies residues 1046-1066; sequence VMLISSILGPGTIFVMIIGAI. Topologically, residues 1067–1074 are extracellular; that stretch reads SISFSIDT. Residues 1075–1095 traverse the membrane as a helical segment; sequence LISLVIVSIPVVVFIVVCLTA. The Cytoplasmic segment spans residues 1096-1100; sequence KPEHQ. A helical transmembrane segment spans residues 1101 to 1121; sequence LICAQTIGAIFAMLMTAVVVG. Residues 1122–1136 lie on the Extracellular side of the membrane; the sequence is TSLQLQKDGLLSPHS. The helical transmembrane segment at 1137–1157 threads the bilayer; sequence MFTVAVATSFLTAAILHPLEF. Residue T1158 is a topological domain, cytoplasmic. The chain crosses the membrane as a helical span at residues 1159 to 1179; sequence CIIPGTIYFLAIPCMYMLLPI. The Extracellular segment spans residues 1180–1375; it reads YSVCNMHTVS…RAGLIAIRNS (196 aa). Residues 1192–1216 are disordered; it reads TREDPRPTEKNTLAKKTPGNLESGD. Positions 1280–1335 form a coiled coil; sequence QIDKCSEADEDEQAEIEDALEMSNQSHAAKKNQKWKQAQSEAWLADKALKRAEREY. N1303 carries an N-linked (GlcNAc...) asparagine glycan. Residues 1376-1396 form a helical membrane-spanning segment; that stretch reads HTVYFLMINIVFIISVLVLQI. Residues 1397-1440 are Cytoplasmic-facing; sequence HKDCLNIEWPLGPKFNHTVRPCYANHDDNQKEEVWVMTRLQLEP. Residues 1441-1461 form a helical membrane-spanning segment; sequence IGLVFLIFFVSILVIQFLAML. The Extracellular segment spans residues 1462–1668; the sequence is CHRFGTLAHI…SSGDVELRRF (207 aa). A disordered region spans residues 1625 to 1668; sequence RLFTAQQDQNSPTSDGNRRKSNSRPWDQPTSSATSSGDVELRRF. Composition is skewed to polar residues over residues 1628–1639 and 1647–1661; these read TAQQDQNSPTSD and SRPWDQPTSSATSSG.

Belongs to the chitin synthase family. Class IV subfamily.

The protein resides in the cell membrane. The catalysed reaction is [(1-&gt;4)-N-acetyl-beta-D-glucosaminyl](n) + UDP-N-acetyl-alpha-D-glucosamine = [(1-&gt;4)-N-acetyl-beta-D-glucosaminyl](n+1) + UDP + H(+). In terms of biological role, may be involved in chitin synthesis in the pharynx during larval development. The chain is Chitin synthase chs-2 from Caenorhabditis elegans.